A 413-amino-acid polypeptide reads, in one-letter code: Zinc finger CCCH domain-containing protein 6 (413 aa).

3 disordered regions span residues 28-61, 159-191, and 333-356; these read PSQVGSESQDHLQAKSPLASHPSDDNLPPGFGGP, DSASDFPTQSGVDVGTEPSITDENTSTSSTLPA, and QPGGGPNPEMVNSSNNNQRPRDSK. Positions 176-189 are enriched in polar residues; sequence PSITDENTSTSSTL. The segment at 357–385 adopts a C3H1-type zinc-finger fold; sequence PKIMKACMYFNSARGCRHGANCMYQHDAT. A compositionally biased stretch (polar residues) spans 389–403; the sequence is PRNLNNGNINTSDMQ. The disordered stretch occupies residues 389 to 413; the sequence is PRNLNNGNINTSDMQNAKRMRFDRD.

This is Zinc finger CCCH domain-containing protein 6 from Arabidopsis thaliana (Mouse-ear cress).